We begin with the raw amino-acid sequence, 721 residues long: Dolichyl-diphosphooligosaccharide--protein glycosyltransferase subunit STT3B (721 aa).

Topologically, residues 1-25 (MAAATALDSLPAPLRSLRLKTKQQE) are cytoplasmic. Residues 26–46 (LLLRVSALALIYVLAFVVRLF) form a helical membrane-spanning segment. Residues 47 to 129 (SVLRYESMIH…VHIREVCVLT (83 aa)) are Lumenal-facing. The short motif at 57 to 59 (EFD) is the DXD motif 1 element. Residue Asp-59 coordinates Mn(2+). A helical membrane pass occupies residues 130–148 (APFFAANTTLVAYAFGREI). Residues 149-150 (WD) lie on the Cytoplasmic side of the membrane. Residues 151-168 (SGAGLVAAALIAVCPGYI) form a helical membrane-spanning segment. Residues 169 to 179 (SRSVAGSYDNE) are Lumenal-facing. Mn(2+) is bound by residues Asp-177 and Glu-179. A DXD motif 2 motif is present at residues 177-179 (DNE). Residues 180–199 (GVAIFALLLTFYLFVRAVNT) traverse the membrane as a helical segment. Residues 200–201 (GS) are Cytoplasmic-facing. A helical transmembrane segment spans residues 202–216 (LAWSLASAFGYFYMV). Residues 217-221 (SAWGG) lie on the Lumenal side of the membrane. Residues 222–238 (YVFIINLLPLYVLVLLV) traverse the membrane as a helical segment. At 239–243 (TGRYS) the chain is on the cytoplasmic side. A helical membrane pass occupies residues 244 to 269 (QRLYVAYNSTYVLGMLLAMQIRFVGF). Residues 270-277 (QHVQSGEH) are Lumenal-facing. A helical transmembrane segment spans residues 278–297 (MAAMGVFFLLQVFFFLDWVK). At 298 to 313 (YLLNDAKLFKSFLRIT) the chain is on the cytoplasmic side. The helical transmembrane segment at 314 to 334 (LTCVITVGTLALGIGTASGYI) threads the bilayer. The Lumenal segment spans residues 335–367 (SPWTGRFYSLLDPTYAKDHIPIIASVSEHQPTA). The short motif at 359-362 (SVSE) is the SVSE motif element. Residues 368–390 (WSSFMFDFHILLFLFPAGLYFCF) form a helical membrane-spanning segment. Residues 391-396 (KRLSDA) are Cytoplasmic-facing. A helical transmembrane segment spans residues 397 to 413 (TIFIVMYGLTSMYFAGV). Residues 414-417 (MVRL) lie on the Lumenal side of the membrane. Dolichyl diphosphooligosaccharide is bound at residue Arg-416. A helical transmembrane segment spans residues 418–439 (ILVAAPAVCLISAIAASATIKN). The Cytoplasmic segment spans residues 440–471 (LTTLIRTKSKSPQTVSGKSSGSKAAAKGAVDQ). Residues 472–492 (SLPFQQNVAIALLLGAFYLLS) form a helical membrane-spanning segment. Topologically, residues 493 to 721 (RYAVHCTWVT…YKVKPPKNRS (229 aa)) are lumenal. Residues 548–550 (WWD) are interacts with target acceptor peptide in protein substrate. Residues 548–552 (WWDYG) carry the WWDYG motif motif. A dolichyl diphosphooligosaccharide-binding site is contributed by Tyr-553. N-linked (GlcNAc...) asparagine glycans are attached at residues Asn-560 and Asn-567. Asn-571 is a glycosylation site (N-linked (GlcNAc...) (high mannose) asparagine). A DK motif motif is present at residues 615 to 622 (DINKFLWM).

The protein belongs to the STT3 family. Component of the oligosaccharyltransferase (OST) complex. Mg(2+) is required as a cofactor. The cofactor is Mn(2+).

Its subcellular location is the endoplasmic reticulum membrane. It catalyses the reaction a di-trans,poly-cis-dolichyl diphosphooligosaccharide + L-asparaginyl-[protein] = N(4)-(oligosaccharide-(1-&gt;4)-N-acetyl-beta-D-glucosaminyl-(1-&gt;4)-N-acetyl-beta-D-glucosaminyl)-L-asparaginyl-[protein] + a di-trans,poly-cis-dolichyl diphosphate + H(+). It participates in protein modification; protein glycosylation. In terms of biological role, catalytic subunit of the oligosaccharyl transferase (OST) complex that catalyzes the initial transfer of a defined glycan (Glc(3)Man(9)GlcNAc(2) in eukaryotes) from the lipid carrier dolichol-pyrophosphate to an asparagine residue within an Asn-X-Ser/Thr consensus motif in nascent polypeptide chains, the first step in protein N-glycosylation. N-glycosylation occurs cotranslationally and the complex associates with the Sec61 complex at the channel-forming translocon complex that mediates protein translocation across the endoplasmic reticulum (ER). All subunits are required for a maximal enzyme activity. This subunit contains the active site and the acceptor peptide and donor lipid-linked oligosaccharide (LLO) binding pockets. The protein is Dolichyl-diphosphooligosaccharide--protein glycosyltransferase subunit STT3B (STT3B) of Oryza sativa subsp. japonica (Rice).